The following is a 416-amino-acid chain: Multifunctional CCA protein (416 aa).

Positions 8 and 11 each coordinate ATP. CTP-binding residues include glycine 8 and arginine 11. Mg(2+) contacts are provided by aspartate 21 and aspartate 23. Residues arginine 91, arginine 137, and arginine 140 each contribute to the ATP site. Residues arginine 91, arginine 137, and arginine 140 each contribute to the CTP site. The 102-residue stretch at 228 to 329 (TGLHTMMVLA…IKLFDKADFW (102 aa)) folds into the HD domain.

The protein belongs to the tRNA nucleotidyltransferase/poly(A) polymerase family. Bacterial CCA-adding enzyme type 1 subfamily. As to quaternary structure, monomer. Can also form homodimers and oligomers. The cofactor is Mg(2+). Requires Ni(2+) as cofactor.

It carries out the reaction a tRNA precursor + 2 CTP + ATP = a tRNA with a 3' CCA end + 3 diphosphate. The enzyme catalyses a tRNA with a 3' CCA end + 2 CTP + ATP = a tRNA with a 3' CCACCA end + 3 diphosphate. Functionally, catalyzes the addition and repair of the essential 3'-terminal CCA sequence in tRNAs without using a nucleic acid template. Adds these three nucleotides in the order of C, C, and A to the tRNA nucleotide-73, using CTP and ATP as substrates and producing inorganic pyrophosphate. tRNA 3'-terminal CCA addition is required both for tRNA processing and repair. Also involved in tRNA surveillance by mediating tandem CCA addition to generate a CCACCA at the 3' terminus of unstable tRNAs. While stable tRNAs receive only 3'-terminal CCA, unstable tRNAs are marked with CCACCA and rapidly degraded. The protein is Multifunctional CCA protein of Shewanella sp. (strain MR-7).